The primary structure comprises 320 residues: ATP-dependent 6-phosphofructokinase (320 aa).

Glycine 12 provides a ligand contact to ATP. Residues 22-26 and 55-60 each bind ADP; these read RGVVR and RYSVSD. ATP contacts are provided by residues 73–74 and 103–106; these read RF and GDGS. Aspartate 104 lines the Mg(2+) pocket. 126–128 contacts substrate; that stretch reads TID. Aspartate 128 serves as the catalytic Proton acceptor. Residue arginine 155 participates in ADP binding. Substrate contacts are provided by residues arginine 163 and 170–172; that span reads MGR. ADP-binding positions include 186 to 188, lysine 212, and 214 to 216; these read GCE and KKH. Substrate contacts are provided by residues glutamate 223, arginine 244, and 250 to 253; that span reads HIQR.

The protein belongs to the phosphofructokinase type A (PFKA) family. ATP-dependent PFK group I subfamily. Prokaryotic clade 'B1' sub-subfamily. Homotetramer. Requires Mg(2+) as cofactor.

The protein localises to the cytoplasm. It catalyses the reaction beta-D-fructose 6-phosphate + ATP = beta-D-fructose 1,6-bisphosphate + ADP + H(+). It functions in the pathway carbohydrate degradation; glycolysis; D-glyceraldehyde 3-phosphate and glycerone phosphate from D-glucose: step 3/4. With respect to regulation, allosterically activated by ADP and other diphosphonucleosides, and allosterically inhibited by phosphoenolpyruvate. Its function is as follows. Catalyzes the phosphorylation of D-fructose 6-phosphate to fructose 1,6-bisphosphate by ATP, the first committing step of glycolysis. This Klebsiella pneumoniae (strain 342) protein is ATP-dependent 6-phosphofructokinase.